We begin with the raw amino-acid sequence, 191 residues long: Probable protein adenylyltransferase HI_0977 (191 aa).

Residues 37–162 (GSTKGLQQIH…NDLEIRFLLQ (126 aa)) form the Fido domain. Residues 67 to 68 (KG), 112 to 114 (GNG), Arg-118, and Gln-145 each bind ATP.

The protein belongs to the fic family.

It catalyses the reaction L-tyrosyl-[protein] + ATP = O-(5'-adenylyl)-L-tyrosyl-[protein] + diphosphate. The catalysed reaction is L-threonyl-[protein] + ATP = 3-O-(5'-adenylyl)-L-threonyl-[protein] + diphosphate. Its function is as follows. Probable adenylyltransferase that mediates the addition of adenosine 5'-monophosphate (AMP) to specific residues of target proteins. The chain is Probable protein adenylyltransferase HI_0977 from Haemophilus influenzae (strain ATCC 51907 / DSM 11121 / KW20 / Rd).